We begin with the raw amino-acid sequence, 230 residues long: Heptaprenylglyceryl phosphate synthase (230 aa).

Position 12 (K12) interacts with sn-glycerol 1-phosphate. The Mg(2+) site is built by D14 and T40. Residues 159 to 164 (YIEYSG), G189, and 209 to 210 (GD) each bind sn-glycerol 1-phosphate.

The protein belongs to the GGGP/HepGP synthase family. Group I subfamily. As to quaternary structure, homodimer. Mg(2+) is required as a cofactor.

It carries out the reaction sn-glycerol 1-phosphate + all-trans-heptaprenyl diphosphate = 3-heptaprenyl-sn-glycero-1-phosphate + diphosphate. It participates in membrane lipid metabolism; glycerophospholipid metabolism. Functionally, prenyltransferase that catalyzes in vivo the transfer of the heptaprenyl moiety of heptaprenyl pyrophosphate (HepPP; 35 carbon atoms) to the C3 hydroxyl of sn-glycerol-1-phosphate (G1P), producing heptaprenylglyceryl phosphate (HepGP). This reaction is an ether-bond-formation step in the biosynthesis of archaea-type G1P-based membrane lipids found in Bacillales. The sequence is that of Heptaprenylglyceryl phosphate synthase from Staphylococcus aureus (strain USA300).